A 152-amino-acid chain; its full sequence is 6,7-dimethyl-8-ribityllumazine synthase (152 aa).

5-amino-6-(D-ribitylamino)uracil contacts are provided by residues F18, 49–51 (ALE), and 75–77 (CVI). 80 to 81 (ET) provides a ligand contact to (2S)-2-hydroxy-3-oxobutyl phosphate. The active-site Proton donor is H83. N108 serves as a coordination point for 5-amino-6-(D-ribitylamino)uracil. A (2S)-2-hydroxy-3-oxobutyl phosphate-binding site is contributed by R122.

Belongs to the DMRL synthase family.

The enzyme catalyses (2S)-2-hydroxy-3-oxobutyl phosphate + 5-amino-6-(D-ribitylamino)uracil = 6,7-dimethyl-8-(1-D-ribityl)lumazine + phosphate + 2 H2O + H(+). It participates in cofactor biosynthesis; riboflavin biosynthesis; riboflavin from 2-hydroxy-3-oxobutyl phosphate and 5-amino-6-(D-ribitylamino)uracil: step 1/2. In terms of biological role, catalyzes the formation of 6,7-dimethyl-8-ribityllumazine by condensation of 5-amino-6-(D-ribitylamino)uracil with 3,4-dihydroxy-2-butanone 4-phosphate. This is the penultimate step in the biosynthesis of riboflavin. In Bartonella bacilliformis (strain ATCC 35685 / KC583 / Herrer 020/F12,63), this protein is 6,7-dimethyl-8-ribityllumazine synthase.